The chain runs to 286 residues: Phosphate import ATP-binding protein PstB (286 aa).

Residues 40–281 enclose the ABC transporter domain; sequence IAVRNLDFYY…PREQRTQEYI (242 aa). 72 to 79 is a binding site for ATP; it reads GPSGCGKS.

Belongs to the ABC transporter superfamily. Phosphate importer (TC 3.A.1.7) family. As to quaternary structure, the complex is composed of two ATP-binding proteins (PstB), two transmembrane proteins (PstC and PstA) and a solute-binding protein (PstS).

Its subcellular location is the cell inner membrane. It catalyses the reaction phosphate(out) + ATP + H2O = ADP + 2 phosphate(in) + H(+). In terms of biological role, part of the ABC transporter complex PstSACB involved in phosphate import. Responsible for energy coupling to the transport system. This chain is Phosphate import ATP-binding protein PstB, found in Granulibacter bethesdensis (strain ATCC BAA-1260 / CGDNIH1).